A 340-amino-acid polypeptide reads, in one-letter code: Methionine import ATP-binding protein MetN 2 (340 aa).

One can recognise an ABC transporter domain in the interval 2–241 (ITLQNVVKEY…PQEKVTQRFV (240 aa)). 38 to 45 (GYSGAGKS) lines the ATP pocket.

Belongs to the ABC transporter superfamily. Methionine importer (TC 3.A.1.24) family. As to quaternary structure, the complex is composed of two ATP-binding proteins (MetN), two transmembrane proteins (MetI) and a solute-binding protein (MetQ).

Its subcellular location is the cell membrane. It catalyses the reaction L-methionine(out) + ATP + H2O = L-methionine(in) + ADP + phosphate + H(+). The enzyme catalyses D-methionine(out) + ATP + H2O = D-methionine(in) + ADP + phosphate + H(+). Part of the ABC transporter complex MetNIQ involved in methionine import. Responsible for energy coupling to the transport system. This chain is Methionine import ATP-binding protein MetN 2, found in Listeria monocytogenes serotype 4b (strain F2365).